A 514-amino-acid chain; its full sequence is Na(+)/H(+) antiporter NhaB (514 aa).

12 helical membrane-spanning segments follow: residues 23–43 (LALL…PFIA), 52–72 (IFTL…LLAI), 97–117 (LLLM…LFIF), 120–140 (LLLS…AAAF), 144–164 (FLDA…FYGI), 202–222 (LMMH…VGEP), 238–258 (FFLR…LTCL), 303–323 (ALIG…VGLI), 353–373 (FTAL…QSLF), 391–411 (LFYL…VGTI), 447–467 (ATPN…APLI), and 475–495 (VWMA…CVEF).

Belongs to the NhaB Na(+)/H(+) (TC 2.A.34) antiporter family.

Its subcellular location is the cell inner membrane. The catalysed reaction is 2 Na(+)(in) + 3 H(+)(out) = 2 Na(+)(out) + 3 H(+)(in). Na(+)/H(+) antiporter that extrudes sodium in exchange for external protons. The protein is Na(+)/H(+) antiporter NhaB of Escherichia fergusonii (strain ATCC 35469 / DSM 13698 / CCUG 18766 / IAM 14443 / JCM 21226 / LMG 7866 / NBRC 102419 / NCTC 12128 / CDC 0568-73).